The sequence spans 126 residues: Small ribosomal subunit protein uS13 (126 aa).

Residues 98–126 are disordered; sequence VRGQSTKNNARTRKGKRKTVANKKKAAKK. Residues 107 to 126 are compositionally biased toward basic residues; that stretch reads ARTRKGKRKTVANKKKAAKK.

It belongs to the universal ribosomal protein uS13 family. Part of the 30S ribosomal subunit. Forms a loose heterodimer with protein S19. Forms two bridges to the 50S subunit in the 70S ribosome.

Its function is as follows. Located at the top of the head of the 30S subunit, it contacts several helices of the 16S rRNA. In the 70S ribosome it contacts the 23S rRNA (bridge B1a) and protein L5 of the 50S subunit (bridge B1b), connecting the 2 subunits; these bridges are implicated in subunit movement. Contacts the tRNAs in the A and P-sites. The chain is Small ribosomal subunit protein uS13 from Amoebophilus asiaticus (strain 5a2).